The primary structure comprises 89 residues: Small ribosomal subunit protein uS15 (89 aa).

It belongs to the universal ribosomal protein uS15 family. In terms of assembly, part of the 30S ribosomal subunit. Forms a bridge to the 50S subunit in the 70S ribosome, contacting the 23S rRNA.

In terms of biological role, one of the primary rRNA binding proteins, it binds directly to 16S rRNA where it helps nucleate assembly of the platform of the 30S subunit by binding and bridging several RNA helices of the 16S rRNA. Functionally, forms an intersubunit bridge (bridge B4) with the 23S rRNA of the 50S subunit in the ribosome. The polypeptide is Small ribosomal subunit protein uS15 (Polynucleobacter asymbioticus (strain DSM 18221 / CIP 109841 / QLW-P1DMWA-1) (Polynucleobacter necessarius subsp. asymbioticus)).